Here is a 173-residue protein sequence, read N- to C-terminus: uncharacterized protein (173 aa).

This is an uncharacterized protein from Mycobacterium tuberculosis (strain CDC 1551 / Oshkosh).